Reading from the N-terminus, the 122-residue chain is Large ribosomal subunit protein uL14 (122 aa).

The protein belongs to the universal ribosomal protein uL14 family. Part of the 50S ribosomal subunit. Forms a cluster with proteins L3 and L19. In the 70S ribosome, L14 and L19 interact and together make contacts with the 16S rRNA in bridges B5 and B8.

Its function is as follows. Binds to 23S rRNA. Forms part of two intersubunit bridges in the 70S ribosome. The chain is Large ribosomal subunit protein uL14 from Trichlorobacter lovleyi (strain ATCC BAA-1151 / DSM 17278 / SZ) (Geobacter lovleyi).